A 192-amino-acid chain; its full sequence is Ion-translocating oxidoreductase complex subunit B (192 aa).

The interval 1 to 26 is hydrophobic; sequence MNAIWIAVAAVSLLGLAFGAILGYAS. Positions 32–91 constitute a 4Fe-4S domain; it reads EDDPVVEKIDEILPQSQCGQCGYPGCRPYAEAISCNGEKINRCAPGGEAVMLKIAELLNV. [4Fe-4S] cluster-binding residues include cysteine 49, cysteine 52, cysteine 57, cysteine 74, cysteine 117, cysteine 120, cysteine 123, cysteine 127, cysteine 147, cysteine 150, cysteine 153, and cysteine 157. 4Fe-4S ferredoxin-type domains lie at 108 to 137 and 138 to 167; these read MVAV…GATR and AMHT…LQPV.

It belongs to the 4Fe4S bacterial-type ferredoxin family. RnfB subfamily. In terms of assembly, the complex is composed of six subunits: RsxA, RsxB, RsxC, RsxD, RsxE and RsxG. [4Fe-4S] cluster serves as cofactor.

Its subcellular location is the cell inner membrane. Functionally, part of a membrane-bound complex that couples electron transfer with translocation of ions across the membrane. Required to maintain the reduced state of SoxR. This is Ion-translocating oxidoreductase complex subunit B from Escherichia coli O8 (strain IAI1).